A 106-amino-acid polypeptide reads, in one-letter code: MTSEKHAFKMQLNPGMEAEYRKRHDEIWPELVDLLHKSGASDYSIHLDRETNTLFGVLTRPKDHTMASLPEHPVMKKWWAHMADIMATNPDNSPVQSDLVTLFHMP.

Y20 provides a ligand contact to substrate. The active-site Proton donor is H24. Substrate contacts are provided by residues Y43 and 78-79; that span reads WW.

This sequence belongs to the rhamnose mutarotase family. As to quaternary structure, homodimer.

Its subcellular location is the cytoplasm. The enzyme catalyses alpha-L-rhamnose = beta-L-rhamnose. It functions in the pathway carbohydrate metabolism; L-rhamnose metabolism. Its function is as follows. Involved in the anomeric conversion of L-rhamnose. The sequence is that of L-rhamnose mutarotase from Rhizobium etli (strain ATCC 51251 / DSM 11541 / JCM 21823 / NBRC 15573 / CFN 42).